We begin with the raw amino-acid sequence, 600 residues long: Putative acetyltransferase MPN_114 (600 aa).

His323 serves as the catalytic Proton acceptor. 396–409 (TKPLIKAKGIKNSE) is a CoA binding site.

It belongs to the carnitine/choline acetyltransferase family.

This is Putative acetyltransferase MPN_114 from Mycoplasma pneumoniae (strain ATCC 29342 / M129 / Subtype 1) (Mycoplasmoides pneumoniae).